Here is a 770-residue protein sequence, read N- to C-terminus: PH and SEC7 domain-containing protein 2 (770 aa).

The segment covering 1-24 (MDEEKLPCELHKEGSATQEDHGLE) has biased composition (basic and acidic residues). Disordered stretches follow at residues 1–65 (MDEE…RGPD) and 181–304 (IQQR…ANGC). Polar residues predominate over residues 32 to 45 (QNGTAASEGLSSHI). Serine 188 is subject to Phosphoserine. 2 stretches are compositionally biased toward low complexity: residues 216–234 (LGSP…NVLS) and 285–296 (ELSSSEGLEPGS). Residues 256–459 (DDEDDEDTDK…KTLYNSIKNE (204 aa)) form the SEC7 domain. In terms of domain architecture, PH spans 509 to 622 (TTYKHGVLTR…WILRINLVAA (114 aa)). Residues 619-636 (LVAAIFSAPAFPAAVSSM) traverse the membrane as a helical segment. The stretch at 650 to 677 (RLCQEEQLRSHENKLRQVTAELAEHRCH) forms a coiled coil. Positions 738–770 (PALRKTHSSPALSLGHGPVTGSKATKDTSASDT) are disordered.

Belongs to the PSD family.

The protein localises to the cell membrane. The protein resides in the cell projection. Its subcellular location is the ruffle membrane. It is found in the cleavage furrow. This Mus musculus (Mouse) protein is PH and SEC7 domain-containing protein 2 (Psd2).